The following is a 467-amino-acid chain: ATP-dependent protease ATPase subunit HslU (467 aa).

ATP contacts are provided by residues Val-22 and 64–69 (GVGKTE). Residues 149–192 (QTNNPLESLFGGAIPNFGQNNEDEEEPPTEEIKTKRSEIKRQLE) are disordered. Positions 178–192 (EEIKTKRSEIKRQLE) are enriched in basic and acidic residues. Residues Asp-280, Glu-345, and Arg-417 each contribute to the ATP site.

The protein belongs to the ClpX chaperone family. HslU subfamily. In terms of assembly, a double ring-shaped homohexamer of HslV is capped on each side by a ring-shaped HslU homohexamer. The assembly of the HslU/HslV complex is dependent on binding of ATP.

It localises to the cytoplasm. Its function is as follows. ATPase subunit of a proteasome-like degradation complex; this subunit has chaperone activity. The binding of ATP and its subsequent hydrolysis by HslU are essential for unfolding of protein substrates subsequently hydrolyzed by HslV. HslU recognizes the N-terminal part of its protein substrates and unfolds these before they are guided to HslV for hydrolysis. This Staphylococcus aureus (strain MRSA252) protein is ATP-dependent protease ATPase subunit HslU.